Reading from the N-terminus, the 366-residue chain is S-adenosylmethionine:tRNA ribosyltransferase-isomerase (366 aa).

Belongs to the QueA family. Monomer.

The protein localises to the cytoplasm. The catalysed reaction is 7-aminomethyl-7-carbaguanosine(34) in tRNA + S-adenosyl-L-methionine = epoxyqueuosine(34) in tRNA + adenine + L-methionine + 2 H(+). It participates in tRNA modification; tRNA-queuosine biosynthesis. In terms of biological role, transfers and isomerizes the ribose moiety from AdoMet to the 7-aminomethyl group of 7-deazaguanine (preQ1-tRNA) to give epoxyqueuosine (oQ-tRNA). This is S-adenosylmethionine:tRNA ribosyltransferase-isomerase from Parasynechococcus marenigrum (strain WH8102).